A 162-amino-acid polypeptide reads, in one-letter code: NADH-quinone oxidoreductase subunit I (162 aa).

4Fe-4S ferredoxin-type domains follow at residues 52–82 (LRRYPNGEERCIACKLCEAICPAQAITIEAG) and 93–122 (TRYDIDMVKCIYCGMCQEACPVDAIVEGPN). The [4Fe-4S] cluster site is built by Cys62, Cys65, Cys68, Cys72, Cys102, Cys105, Cys108, and Cys112.

The protein belongs to the complex I 23 kDa subunit family. As to quaternary structure, NDH-1 is composed of 14 different subunits. Subunits NuoA, H, J, K, L, M, N constitute the membrane sector of the complex. [4Fe-4S] cluster serves as cofactor.

The protein localises to the cell inner membrane. It catalyses the reaction a quinone + NADH + 5 H(+)(in) = a quinol + NAD(+) + 4 H(+)(out). NDH-1 shuttles electrons from NADH, via FMN and iron-sulfur (Fe-S) centers, to quinones in the respiratory chain. The immediate electron acceptor for the enzyme in this species is believed to be ubiquinone. Couples the redox reaction to proton translocation (for every two electrons transferred, four hydrogen ions are translocated across the cytoplasmic membrane), and thus conserves the redox energy in a proton gradient. This Methylorubrum populi (strain ATCC BAA-705 / NCIMB 13946 / BJ001) (Methylobacterium populi) protein is NADH-quinone oxidoreductase subunit I.